Reading from the N-terminus, the 235-residue chain is Segregation and condensation protein A (235 aa).

The protein belongs to the ScpA family. In terms of assembly, component of a cohesin-like complex composed of ScpA, ScpB and the Smc homodimer, in which ScpA and ScpB bind to the head domain of Smc. The presence of the three proteins is required for the association of the complex with DNA.

It localises to the cytoplasm. Participates in chromosomal partition during cell division. May act via the formation of a condensin-like complex containing Smc and ScpB that pull DNA away from mid-cell into both cell halves. The sequence is that of Segregation and condensation protein A from Streptococcus mutans serotype c (strain ATCC 700610 / UA159).